The following is a 517-amino-acid chain: GMP synthase [glutamine-hydrolyzing] (517 aa).

The region spanning 11–202 (KIIVLDYGSQ…AFDVCHAEAN (192 aa)) is the Glutamine amidotransferase type-1 domain. Cys88 (nucleophile) is an active-site residue. Residues His176 and Glu178 contribute to the active site. Residues 203 to 392 (WSMDDFITKQ…LGMPHSLVWR (190 aa)) enclose the GMPS ATP-PPase domain. Position 230-236 (230-236 (SGGVDSS)) interacts with ATP.

As to quaternary structure, homodimer.

It carries out the reaction XMP + L-glutamine + ATP + H2O = GMP + L-glutamate + AMP + diphosphate + 2 H(+). It functions in the pathway purine metabolism; GMP biosynthesis; GMP from XMP (L-Gln route): step 1/1. Its function is as follows. Catalyzes the synthesis of GMP from XMP. This chain is GMP synthase [glutamine-hydrolyzing] (guaA), found in Lacticaseibacillus rhamnosus (Lactobacillus rhamnosus).